A 125-amino-acid chain; its full sequence is Large-conductance mechanosensitive channel (125 aa).

A run of 2 helical transmembrane segments spans residues 14–34 (VIDLAVGVIIGAAFTAIVQSL) and 67–87 (GSFLNSIINFLIISFIVFLIV).

Belongs to the MscL family. Homopentamer.

The protein resides in the cell membrane. In terms of biological role, channel that opens in response to stretch forces in the membrane lipid bilayer. May participate in the regulation of osmotic pressure changes within the cell. This chain is Large-conductance mechanosensitive channel, found in Lactobacillus helveticus (strain DPC 4571).